A 375-amino-acid chain; its full sequence is Anhydro-N-acetylmuramic acid kinase (375 aa).

14 to 21 (GTSMDGAD) is a binding site for ATP.

Belongs to the anhydro-N-acetylmuramic acid kinase family.

It catalyses the reaction 1,6-anhydro-N-acetyl-beta-muramate + ATP + H2O = N-acetyl-D-muramate 6-phosphate + ADP + H(+). It participates in amino-sugar metabolism; 1,6-anhydro-N-acetylmuramate degradation. The protein operates within cell wall biogenesis; peptidoglycan recycling. In terms of biological role, catalyzes the specific phosphorylation of 1,6-anhydro-N-acetylmuramic acid (anhMurNAc) with the simultaneous cleavage of the 1,6-anhydro ring, generating MurNAc-6-P. Is required for the utilization of anhMurNAc either imported from the medium or derived from its own cell wall murein, and thus plays a role in cell wall recycling. The sequence is that of Anhydro-N-acetylmuramic acid kinase from Cupriavidus pinatubonensis (strain JMP 134 / LMG 1197) (Cupriavidus necator (strain JMP 134)).